Consider the following 227-residue polypeptide: MSESLIAIVPAAGIGARASLPGEAAVPKQYRPLAGQPMLRHAVRALLADPRIVQVRVAVSAGDGWVEQALAGLPRTVWRPCGGPNRADTVAAALADSGAAADDWILVHDAARPGLPAAALARLIDACLDDAVGGLLALPVADTVKAGRQRVSRTVDRDGLWLAQTPQMFRAGLLRDALARARAAGLAVTDEASAVEAAGHAPRLVAGALRNFKVTWPDDFELMEKWL.

Belongs to the IspD/TarI cytidylyltransferase family. IspD subfamily.

It carries out the reaction 2-C-methyl-D-erythritol 4-phosphate + CTP + H(+) = 4-CDP-2-C-methyl-D-erythritol + diphosphate. It participates in isoprenoid biosynthesis; isopentenyl diphosphate biosynthesis via DXP pathway; isopentenyl diphosphate from 1-deoxy-D-xylulose 5-phosphate: step 2/6. Functionally, catalyzes the formation of 4-diphosphocytidyl-2-C-methyl-D-erythritol from CTP and 2-C-methyl-D-erythritol 4-phosphate (MEP). The protein is 2-C-methyl-D-erythritol 4-phosphate cytidylyltransferase of Bordetella bronchiseptica (strain ATCC BAA-588 / NCTC 13252 / RB50) (Alcaligenes bronchisepticus).